Here is a 959-residue protein sequence, read N- to C-terminus: MTAESEVVNWPANEIRRTFLKYFEDHGHTIVPSSSVIPYDDPTLLFANAGMNQFKPIFLGTVDPSSDFAKLKRACDSQKCIRAGGKHNDLEDVGKDNYHHTMFEMLGNWSFGDYFKKEAIAMAWDLLTNVYGLKKDQLYVTYFGGHEESGLEPDLEARQLWLDIGIDESRVIPGSLKDNFWEMGDQGPCGPCSEIHYDRIGNRTVPELVNMDDPNVLEIWNIVFIQFNREKDGSLRPLPNRHVDTGMGFERLVSVIQNKTSNYDTDVFSPIFAKIQELTNARPYTGKMGDEDVDGIDTAYRVVADHVRTLTFAISDGGVPNNEGRGYVLRRILRRGARYVRKKFGVPIGNFFSRLSLTVVEQMGDFFPELKRKVDDVRELLDEEEESFSRTLDRGEKMFEQYAAAAKKTPSKTLQGNDVWRLYETYGFPVDLTHLMAEEAGIKIDEPGFEAAQARSKEISKQASKGGSSGDDLLVLDVHALGALSKMDDIPETDDVFKHNSVSLKSVIKGIYHKGGFQKSTEGFNSGEQLGLLLDRTNFYAEQGGQEYDTGHIVIDGVADFRVTNVQVYAGYVLHTGFLEYGNLTVNDSVVCEYDEIRRWHLMNNHTVTHILNLALRNTLGDGIDQRGSLVSQEKLRFDFSYKSSIPIDKLLLVENYCNNVIQDNLSVYSKEVALSKAKEINGLRAVFGEVYPDPVRVVCIGVDIDTLLQEPKKPDWTKYSIEFCGGTHCDKSGEIKDFVILEENGIAKGIRRIVAVTSTEANRVSRLANEFDARIAKLEKMPFSPAKEAELKKISVDLSKLVVAAVRKHAMKERIAKITKQVQEHVKAINAAEQKEVVNVVTEYFKENPDMSFVVAKVPISANPKALSFALTYAKKNLKDKSIYLLASDDTKVAHACLVSPEAMKKLTPQEWSQKVCHSIGGRSGGKGDTCQGVGDKPLSIDVAVEEAIEFFQGKLTI.

Ser389 bears the Phosphoserine mark. Zn(2+)-binding residues include His606, His610, Cys725, and His729.

Belongs to the class-II aminoacyl-tRNA synthetase family. Monomer. Requires Zn(2+) as cofactor.

The protein resides in the mitochondrion. The protein localises to the cytoplasm. It catalyses the reaction tRNA(Ala) + L-alanine + ATP = L-alanyl-tRNA(Ala) + AMP + diphosphate. Its function is as follows. Catalyzes the attachment of alanine to tRNA(Ala) in a two-step reaction: alanine is first activated by ATP to form Ala-AMP and then transferred to the acceptor end of tRNA(Ala). Also edits incorrectly charged tRNA(Ala) via its editing domain. In Schizosaccharomyces pombe (strain 972 / ATCC 24843) (Fission yeast), this protein is Alanine--tRNA ligase (ala1).